Here is a 305-residue protein sequence, read N- to C-terminus: ATP synthase gamma chain (305 aa).

It belongs to the ATPase gamma chain family. As to quaternary structure, F-type ATPases have 2 components, CF(1) - the catalytic core - and CF(0) - the membrane proton channel. CF(1) has five subunits: alpha(3), beta(3), gamma(1), delta(1), epsilon(1). CF(0) has three main subunits: a, b and c.

The protein resides in the cell membrane. Its function is as follows. Produces ATP from ADP in the presence of a proton gradient across the membrane. The gamma chain is believed to be important in regulating ATPase activity and the flow of protons through the CF(0) complex. This Mycobacterium tuberculosis (strain ATCC 25177 / H37Ra) protein is ATP synthase gamma chain.